The primary structure comprises 255 residues: NAD kinase (255 aa).

D44 functions as the Proton acceptor in the catalytic mechanism. Residues 44 to 45 (DG), H49, 114 to 115 (NE), D144, A152, 155 to 160 (SAYNLS), and Q216 each bind NAD(+).

This sequence belongs to the NAD kinase family. It depends on a divalent metal cation as a cofactor.

The protein resides in the cytoplasm. The enzyme catalyses NAD(+) + ATP = ADP + NADP(+) + H(+). Its function is as follows. Involved in the regulation of the intracellular balance of NAD and NADP, and is a key enzyme in the biosynthesis of NADP. Catalyzes specifically the phosphorylation on 2'-hydroxyl of the adenosine moiety of NAD to yield NADP. This is NAD kinase from Rickettsia africae (strain ESF-5).